The following is a 266-amino-acid chain: DNA-directed RNA polymerase subunit Rpo3 (266 aa).

[3Fe-4S] cluster contacts are provided by cysteine 205, cysteine 208, and cysteine 211.

It belongs to the archaeal Rpo3/eukaryotic RPB3 RNA polymerase subunit family. As to quaternary structure, part of the RNA polymerase complex. The cofactor is [3Fe-4S] cluster.

It is found in the cytoplasm. The enzyme catalyses RNA(n) + a ribonucleoside 5'-triphosphate = RNA(n+1) + diphosphate. Functionally, DNA-dependent RNA polymerase (RNAP) catalyzes the transcription of DNA into RNA using the four ribonucleoside triphosphates as substrates. The chain is DNA-directed RNA polymerase subunit Rpo3 from Methanosarcina acetivorans (strain ATCC 35395 / DSM 2834 / JCM 12185 / C2A).